Here is a 791-residue protein sequence, read N- to C-terminus: Disintegrin and metalloproteinase domain-containing protein 1a (791 aa).

A signal peptide spans 1–65 (MSVAAAGRGF…LLIFLPSTFC (65 aa)). N-linked (GlcNAc...) asparagine glycosylation occurs at N72. The interval 201 to 220 (CSVTPKDSPGDTSHPPRSRK) is disordered. The Peptidase M12B domain maps to 235–429 (KYVEMFVVVN…HRGACLLDEP (195 aa)). The N-linked (GlcNAc...) asparagine glycan is linked to N256. Disulfide bonds link C345–C424, C385–C408, and C387–C393. H370 contributes to the Zn(2+) binding site. E371 is a catalytic residue. H374 and H380 together coordinate Zn(2+). 2 N-linked (GlcNAc...) asparagine glycosylation sites follow: N407 and N484. Positions 438 to 522 (AANCGNGVVE…ECPANSYMQD (85 aa)) constitute a Disintegrin domain. An intrachain disulfide couples C494 to C514. N-linked (GlcNAc...) asparagine glycosylation is present at N630. One can recognise an EGF-like domain in the interval 663–697 (LQYNCEPQEMCHGNGVCNNFKHCHCDAGFAPPDCS). 3 disulfide bridges follow: C667-C679, C673-C685, and C687-C696. Residues 741–761 (VMVLVVPIFLVVLLCCLMLIA) traverse the membrane as a helical segment. The Cytoplasmic portion of the chain corresponds to 762–791 (YLWSEVQEVVSPPSSSESSSSSSWSDSDSQ). The segment at 772–791 (SPPSSSESSSSSSWSDSDSQ) is disordered.

As to quaternary structure, heterodimer with ADAM2/fertilin subunit beta. In terms of tissue distribution, testis.

The protein resides in the membrane. In terms of biological role, may be involved in sperm-egg fusion. The polypeptide is Disintegrin and metalloproteinase domain-containing protein 1a (Adam1a) (Mus musculus (Mouse)).